The primary structure comprises 642 residues: Sodium-dependent phosphate transport protein 2A (642 aa).

At 1–106 (MISYGEQLSS…LRRTAMTLLK (106 aa)) the chain is on the cytoplasmic side. Phosphoserine occurs at positions 14 and 37. Residues 107–128 (LPLMVTFLYLFVCSLDVLSSAF) traverse the membrane as a helical segment. Residues 129-148 (QLAGGKVAGDIFKDNAILAN) lie on the Extracellular side of the membrane. A helical membrane pass occupies residues 149-166 (PVAGLVVGILVTVLVQSS). Residues 167-168 (ST) lie on the Cytoplasmic side of the membrane. The helical transmembrane segment at 169–188 (ATSIIVSMVSSGLLEVSSAI) threads the bilayer. At 189-350 (PIIMGSNIGT…HIFVDTQLPD (162 aa)) the chain is on the extracellular side. Disulfide bonds link C228–C525 and C309–C339. Residues N301, N326, and N333 are each glycosylated (N-linked (GlcNAc...) asparagine). A helical transmembrane segment spans residues 351-373 (LAVGLILLAGSLVLLCTCLILLV). Residues 374-415 (KMLNSLLKGQVAKVIQKVINTDLPAPFTWVTGYFAMVVGAAM) are Cytoplasmic-facing. Residues 416-439 (TFIVQSSSVFTSAITPLVGLGVIS) form a helical membrane-spanning segment. Residues 440 to 469 (IERAYPLTLGSNIGTTTTAILAALASPREK) lie on the Extracellular side of the membrane. Residues 470 to 490 (LSSSFQIALCHFFFNISGILL) form a helical membrane-spanning segment. Residues 491–516 (WYPLPCTRLPIRMAKALGKRTAKYRW) are Cytoplasmic-facing. T511 bears the Phosphothreonine; by PKC mark. A helical transmembrane segment spans residues 517–537 (FAVLYLLVCFLLLPSLVFGIS). The Extracellular segment spans residues 538 to 542 (MAGWR). Residues 543–564 (AMVGVGAPFGALLAFVVLINVL) form a helical membrane-spanning segment. Residues 565–642 (QSRSPGRLPK…LPAHHNATRL (78 aa)) lie on the Cytoplasmic side of the membrane. S610 bears the Phosphoserine mark. T626 is subject to Phosphothreonine. At S628 the chain carries Phosphoserine.

Belongs to the SLC34A transporter family. Interacts via its C-terminal region with NHERF4. Interacts with NHERF1. Interacts with TMEM174; regulates SLC34A1 internalization by PTH and FGF23. Expressed in the kidney cortex.

The protein localises to the apical cell membrane. The protein resides in the cell membrane. The enzyme catalyses 3 Na(+)(out) + phosphate(out) = 3 Na(+)(in) + phosphate(in). Transport activity is significantly increased in response to dietary phosphate deprivation. Functionally, involved in actively transporting phosphate into cells via Na(+) cotransport in the renal brush border membrane. The cotransport has a Na(+):Pi stoichiometry of 3:1 and is electrogenic. The protein is Sodium-dependent phosphate transport protein 2A of Oryctolagus cuniculus (Rabbit).